The primary structure comprises 189 residues: Potassium-transporting ATPase KdpC subunit (189 aa).

A helical transmembrane segment spans residues 10 to 30; it reads VIFAMLTLICGVIYPYAITGI.

The protein belongs to the KdpC family. As to quaternary structure, the system is composed of three essential subunits: KdpA, KdpB and KdpC.

The protein resides in the cell inner membrane. In terms of biological role, part of the high-affinity ATP-driven potassium transport (or Kdp) system, which catalyzes the hydrolysis of ATP coupled with the electrogenic transport of potassium into the cytoplasm. This subunit acts as a catalytic chaperone that increases the ATP-binding affinity of the ATP-hydrolyzing subunit KdpB by the formation of a transient KdpB/KdpC/ATP ternary complex. The chain is Potassium-transporting ATPase KdpC subunit from Janthinobacterium sp. (strain Marseille) (Minibacterium massiliensis).